A 279-amino-acid polypeptide reads, in one-letter code: MQNHVISLASAAERRAHIAATFGSRGIPFQFFDALMPSERLERAMAELVPGLSAHPYLSGVEKACFMSHAVLWEQALDEGVPYIAVFEDDVLLGEGAEQFLAEDTWLQERFDPDSAFVVRLETMFMHVLTSPSGVADYGGRAFPLLESEHCGTAGYIISRKAMRFFLDRFAVLPPERLHPVDLMMFGNPDDREGMPVCQLNPALCAQELHYAKFHDQNSALGSLIEHDRRLNRKQQWRDSPANTFKHRLIRALTKIGREREKRRQRREQLIGKIIVPFQ.

Belongs to the glycosyltransferase 25 family.

The protein operates within glycan metabolism; lacto-N-neotetraose biosynthesis. It functions in the pathway bacterial outer membrane biogenesis; lipooligosaccharide biosynthesis. Its function is as follows. Adds the second galactose to the lacto-N-tetraose chain in lipooligosaccharide (LOS). The sequence is that of Lacto-N-neotetraose biosynthesis glycosyltransferase LgtB (lgtB) from Neisseria gonorrhoeae.